The following is an 81-amino-acid chain: MDTKVACLLLIILGALTVQGAVSGNKRMNLHARQWGGIERECMNNGEEQCFPMGQCPGGFRECSEYYCGSPSLGCCCWDEW.

An N-terminal signal peptide occupies residues 1-23; the sequence is MDTKVACLLLIILGALTVQGAVS. Residues 24–25 constitute a propeptide that is removed on maturation; sequence GN.

This sequence belongs to the Cnidaria small cysteine-rich protein (SCRiP) family. beta subfamily. Post-translationally, contains 4 disulfide bonds.

It localises to the secreted. The protein resides in the nematocyst. Induces neurotoxic symptoms on zebrafish. Has also been claimed to be implied in calcification, but tests on homolog proteins suggest that proteins of this family have a neurotoxic function and not a calcification function. In Orbicella faveolata (Mountainous star coral), this protein is Small cysteine-rich protein 4.